Reading from the N-terminus, the 335-residue chain is Mevalonate kinase (335 aa).

An ATP-binding site is contributed by 111-121; sequence PVGAGLGSSAA. Asp-162 acts as the Proton acceptor in catalysis.

This sequence belongs to the GHMP kinase family. Mevalonate kinase subfamily. As to quaternary structure, homodimer. Mg(2+) is required as a cofactor.

It localises to the cytoplasm. It carries out the reaction (R)-mevalonate + ATP = (R)-5-phosphomevalonate + ADP + H(+). Its pathway is isoprenoid biosynthesis; isopentenyl diphosphate biosynthesis via mevalonate pathway; isopentenyl diphosphate from (R)-mevalonate: step 1/3. Functionally, catalyzes the phosphorylation of (R)-mevalonate (MVA) to (R)-mevalonate 5-phosphate (MVAP). Functions in the mevalonate (MVA) pathway leading to isopentenyl diphosphate (IPP), a key precursor for the biosynthesis of isoprenoid compounds such as archaeal membrane lipids. The protein is Mevalonate kinase of Pyrococcus abyssi (strain GE5 / Orsay).